Consider the following 631-residue polypeptide: Phosphomethylpyrimidine synthase (631 aa).

Substrate contacts are provided by residues Asn239, Met268, Tyr297, His333, 353–355 (SRG), 394–397 (DGLR), and Glu433. Residue His437 participates in Zn(2+) binding. Position 460 (Tyr460) interacts with substrate. His501 serves as a coordination point for Zn(2+). Positions 581, 584, and 589 each coordinate [4Fe-4S] cluster.

Belongs to the ThiC family. As to quaternary structure, homodimer. [4Fe-4S] cluster is required as a cofactor.

The catalysed reaction is 5-amino-1-(5-phospho-beta-D-ribosyl)imidazole + S-adenosyl-L-methionine = 4-amino-2-methyl-5-(phosphooxymethyl)pyrimidine + CO + 5'-deoxyadenosine + formate + L-methionine + 3 H(+). The protein operates within cofactor biosynthesis; thiamine diphosphate biosynthesis. Catalyzes the synthesis of the hydroxymethylpyrimidine phosphate (HMP-P) moiety of thiamine from aminoimidazole ribotide (AIR) in a radical S-adenosyl-L-methionine (SAM)-dependent reaction. This is Phosphomethylpyrimidine synthase from Escherichia coli O45:K1 (strain S88 / ExPEC).